The chain runs to 417 residues: uncharacterized protein (417 aa).

2 disordered regions span residues 44–83 (FTNE…VRSR) and 325–346 (VQSA…PPKE). Low complexity predominate over residues 54 to 64 (SNYSTSGYDSS). A compositionally biased stretch (polar residues) spans 65–76 (AETISANSSPIN). Over residues 326 to 339 (QSARKNQKKGRKNR) the composition is skewed to basic residues. A helical membrane pass occupies residues 362–382 (FLIIGVYVLVFIYVCTNVLTV).

The protein resides in the membrane. This is an uncharacterized protein from Caenorhabditis elegans.